The chain runs to 733 residues: Phosphoribosylformylglycinamidine synthase subunit PurL (733 aa).

H41 is a catalytic residue. The ATP site is built by Y44 and K83. E85 is a binding site for Mg(2+). Substrate contacts are provided by residues 86–89 (SHNH) and R108. H87 acts as the Proton acceptor in catalysis. A Mg(2+)-binding site is contributed by D109. Residues 212-232 (GASFASQELSEESEEKRPSVQ) form a disordered region. A substrate-binding site is contributed by Q232. Residue D260 participates in Mg(2+) binding. Residue 304-306 (ESQ) coordinates substrate. The ATP site is built by D488 and G525. N526 contributes to the Mg(2+) binding site. Position 528 (S528) interacts with substrate.

Belongs to the FGAMS family. As to quaternary structure, monomer. Part of the FGAM synthase complex composed of 1 PurL, 1 PurQ and 2 PurS subunits.

It is found in the cytoplasm. The catalysed reaction is N(2)-formyl-N(1)-(5-phospho-beta-D-ribosyl)glycinamide + L-glutamine + ATP + H2O = 2-formamido-N(1)-(5-O-phospho-beta-D-ribosyl)acetamidine + L-glutamate + ADP + phosphate + H(+). The protein operates within purine metabolism; IMP biosynthesis via de novo pathway; 5-amino-1-(5-phospho-D-ribosyl)imidazole from N(2)-formyl-N(1)-(5-phospho-D-ribosyl)glycinamide: step 1/2. Functionally, part of the phosphoribosylformylglycinamidine synthase complex involved in the purines biosynthetic pathway. Catalyzes the ATP-dependent conversion of formylglycinamide ribonucleotide (FGAR) and glutamine to yield formylglycinamidine ribonucleotide (FGAM) and glutamate. The FGAM synthase complex is composed of three subunits. PurQ produces an ammonia molecule by converting glutamine to glutamate. PurL transfers the ammonia molecule to FGAR to form FGAM in an ATP-dependent manner. PurS interacts with PurQ and PurL and is thought to assist in the transfer of the ammonia molecule from PurQ to PurL. The sequence is that of Phosphoribosylformylglycinamidine synthase subunit PurL from Thermoanaerobacter sp. (strain X514).